Reading from the N-terminus, the 275-residue chain is Large ribosomal subunit protein uL2c (275 aa).

Residues 219-254 (TVRGSVMNPCDHPHGGGEGRAPIGRTRPLTPWGKPA) form a disordered region.

The protein belongs to the universal ribosomal protein uL2 family. Part of the 50S ribosomal subunit.

Its subcellular location is the plastid. It is found in the chloroplast. The chain is Large ribosomal subunit protein uL2c (rpl2) from Phaeodactylum tricornutum (strain CCAP 1055/1).